We begin with the raw amino-acid sequence, 220 residues long: MAEYLASIFGTEKDKVNCSFYFKIGACRHGDRCSRLHNKPTFSQTIVLLNLYRNPQNTAQTADGSHCHVSDVEVQEHYDNFFEEVFTELQEKYGEIEEMNVCDNLGDHLVGNVYVKFRREEDAERAVAELNNRWFNGQAVHAELSPVTDFRESCCRQYEMGECTRGGFCNFMHLRPISRNLRRQLYGRGPRHRSPPRSHTGHRPRERNRRRSPDHRHGRF.

Alanine 2 is modified (N-acetylalanine). Residues glutamate 12–proline 40 form a C3H1-type 1 zinc finger. An RRM domain is found at serine 65–valine 147. Residues aspartate 149–proline 176 form a C3H1-type 2 zinc finger. The interval tyrosine 186–phenylalanine 220 is disordered. A compositionally biased stretch (basic residues) spans glycine 189 to phenylalanine 220.

It belongs to the splicing factor SR family. Interacts with GFI1, U2AF2 and C1QBP. Isoform 3 interacts with PER1. In terms of processing, isoform 3 is rapidly degraded by a proteasome-mediated degradation pathway. In terms of tissue distribution, ubiquitous. Highly expressed in the brain.

The protein localises to the nucleus. Its subcellular location is the nucleus speckle. The protein resides in the cytoplasm. In terms of biological role, RNA-binding protein that function as a pre-mRNA splicing factor. Plays a critical role in both constitutive and enhancer-dependent splicing by mediating protein-protein interactions and protein-RNA interactions required for accurate 3'-splice site selection. It can functionally substitute for U2AF1 in constitutive splicing and enhancer-dependent splicing. Acts by enhancing the binding of U2AF2 to weak pyrimidine tracts. Also participates in the regulation of alternative pre-mRNA splicing. Activates exon 5 skipping of PTPRC during T-cell activation; an event reversed by GFI1. Binds to RNA at the AG dinucleotide at the 3'-splice site. Shows a preference for AGC or AGA. Alternative splicing of U2AF1L4 may play a role in connecting the circadian rhythm to changing external cues: may provide a circadian buffering system in central and periphery clocks that allows synchronized adaption to clock-resetting stimuli in order to prevent potentially pathogenic desynchronization. The polypeptide is Splicing factor U2AF 26 kDa subunit (U2af1l4) (Mus musculus (Mouse)).